The chain runs to 230 residues: V-type proton ATPase subunit E (230 aa).

Belongs to the V-ATPase E subunit family. As to quaternary structure, V-ATPase is a heteromultimeric enzyme composed of a peripheral catalytic V1 complex (components A to H) attached to an integral membrane V0 proton pore complex (components: a, c, c', c'' and d).

In terms of biological role, subunit of the peripheral V1 complex of vacuolar ATPase essential for assembly or catalytic function. V-ATPase is responsible for acidifying a variety of intracellular compartments in eukaryotic cells. The chain is V-type proton ATPase subunit E (VATE) from Citrus limon (Lemon).